A 130-amino-acid polypeptide reads, in one-letter code: Ribonuclease VapC22 (130 aa).

In terms of domain architecture, PINc spans 4 to 119 (VLLDSHVAYW…RLVTKDRRLR (116 aa)). Residues aspartate 7 and aspartate 97 each coordinate Mg(2+).

This sequence belongs to the PINc/VapC protein family. It depends on Mg(2+) as a cofactor.

The protein localises to the secreted. Its function is as follows. Toxic component of a type II toxin-antitoxin (TA) system. An RNase. Upon expression in M.smegmatis inhibits translation and colony formation. Its toxic effect on colony formation is neutralized by coexpression with cognate antitoxin VapB22; the effect on translation has not been tested but is probably neutralized also. This is Ribonuclease VapC22 from Mycobacterium tuberculosis (strain ATCC 25618 / H37Rv).